The chain runs to 324 residues: Cytochrome f (324 aa).

The N-terminal stretch at 1–30 is a signal peptide; that stretch reads MNMRFSPKALVRQLGRLSLVACLSLGLLGA. Heme-binding residues include Tyr-42, Cys-62, Cys-65, and His-66. The helical transmembrane segment at 290-310 threads the bilayer; sequence VLGVIAFFFAVMLAQIMLVLK.

The protein belongs to the cytochrome f family. The 4 large subunits of the cytochrome b6-f complex are cytochrome b6, subunit IV (17 kDa polypeptide, PetD), cytochrome f and the Rieske protein, while the 4 small subunits are PetG, PetL, PetM and PetN. The complex functions as a dimer. Requires heme as cofactor.

The protein resides in the cellular thylakoid membrane. Component of the cytochrome b6-f complex, which mediates electron transfer between photosystem II (PSII) and photosystem I (PSI), cyclic electron flow around PSI, and state transitions. The chain is Cytochrome f from Synechococcus elongatus (strain ATCC 33912 / PCC 7942 / FACHB-805) (Anacystis nidulans R2).